We begin with the raw amino-acid sequence, 486 residues long: Stretch-activated cation channel yam8 (486 aa).

The signal sequence occupies residues 1–24 (MFFFSTHLILKILFFWSITRNIFG). Over 25–464 (ATYTSLLLNN…PGVEFYESGS (440 aa)) the chain is Extracellular. 5 N-linked (GlcNAc...) asparagine glycosylation sites follow: asparagine 33, asparagine 49, asparagine 59, asparagine 82, and asparagine 93. The helical transmembrane segment at 465–485 (ALLNISWRTFFISLIFWILFV) threads the bilayer. Position 486 (glutamate 486) is a topological domain, cytoplasmic.

It is found in the cell membrane. Calcium-permeable, cation-selective stretch-activated channel (SAC) that functions together with CCH1 to mediate calcium entry into cells. Required during mating. The polypeptide is Stretch-activated cation channel yam8 (Schizosaccharomyces pombe (strain 972 / ATCC 24843) (Fission yeast)).